A 289-amino-acid polypeptide reads, in one-letter code: Serine/threonine-protein phosphatase Pgam5, mitochondrial (289 aa).

Residues 7–23 form a helical membrane-spanning segment; the sequence is FVCGTGAGLAAYYLQRL.

This sequence belongs to the phosphoglycerate mutase family. BPG-dependent PGAM subfamily. As to quaternary structure, interacts with Pk92B/ASK1.

The protein localises to the mitochondrion outer membrane. The enzyme catalyses O-phospho-L-seryl-[protein] + H2O = L-seryl-[protein] + phosphate. It catalyses the reaction O-phospho-L-threonyl-[protein] + H2O = L-threonyl-[protein] + phosphate. Displays phosphatase activity for serine/threonine residues, and dephosphorylates and activates Pk92B kinase. Has apparently no phosphoglycerate mutase activity. This is Serine/threonine-protein phosphatase Pgam5, mitochondrial (Pgam5) from Drosophila melanogaster (Fruit fly).